The chain runs to 382 residues: Gas vesicle protein C1 (382 aa).

Residues 1–18 (MSVTDKRDEMSTARDKFA) are compositionally biased toward basic and acidic residues. The tract at residues 1-21 (MSVTDKRDEMSTARDKFAESQ) is disordered. 7 repeat units span residues 22–60 (QEFE…TNTT), 61–92 (DAFH…REMQ), 93–130 (DAFE…NSTH), 131–168 (GAFE…IAVQ), 169–200 (DAFD…DATA), 201–240 (DAFA…ETTE), and 241–284 (DAFV…VSPD). Residues 22-284 (QEFESYADEF…VEAEAEVSPD (263 aa)) form a 7 X approximate tandem repeats region. Residues 260 to 302 (GAAEAEAEPVEADADVEAEAEVSPDEAGGESAGTEEEETEPAE) show a composition bias toward acidic residues. The disordered stretch occupies residues 260–382 (GAAEAEAEPV…DVPLRPDDKT (123 aa)). Residues 303–316 (VETAAPEVEGSPAD) are compositionally biased toward low complexity. The span at 317–336 (TADEAEDTEAEEETEEEAPE) shows a compositional bias: acidic residues. Positions 365–382 (EYRDEYGEDVPLRPDDKT) are enriched in basic and acidic residues.

It belongs to the halobacterial gas vesicle GvpC family. In terms of assembly, forms homodimers, interacts with GvpF1, GvpH1, GvpI1, GvpL1, GvpN1 and GvpO1 via its C-terminus (residues 329-382).

It is found in the gas vesicle. The protein resides in the cytoplasm. Confers stability, involved in shaping gas vesicles. Gas vesicles are hollow, gas filled proteinaceous nanostructures found in several microbial planktonic microorganisms. They allow positioning of halobacteria at the optimal depth for growth in the poorly aerated, shallow brine pools of their habitat. Its function is as follows. Expression of a 9.5 kb p-vac DNA fragment containing 2 divergently transcribed regions (gvpD-gvpE-gvpF-gvpG-gvpH-gvpI-gvpJ-gvpK-gvpL-gvpM and gvpA-gvpC-gvpN-gvpO) allows H.volcanii to produce gas vesicles. A similar region restores gas vesicle production in H.halobium without the p-vac locus, but it still has the c-vac locus. The chain is Gas vesicle protein C1 (gvpC1) from Halobacterium salinarum (strain ATCC 700922 / JCM 11081 / NRC-1) (Halobacterium halobium).